Consider the following 297-residue polypeptide: Cbb3-type cytochrome c oxidase subunit CcoP (297 aa).

Residues 1-35 (MSKKPTTKKEVQTTGHQWDGIEELNTPLPRWWLWT) are Cytoplasmic-facing. Residues 36–56 (FYATIIWGVAYSIAMPAWPIF) form a helical membrane-spanning segment. The Periplasmic segment spans residues 57–297 (SDKATPGLLG…SYVHSLGGGQ (241 aa)). Cytochrome c domains are found at residues 108-199 (YTRN…LQIS) and 206-294 (VKAT…HSLG). Positions 121, 124, 125, 174, 219, 222, 223, and 264 each coordinate heme c.

It belongs to the CcoP / FixP family. In terms of assembly, component of the cbb3-type cytochrome c oxidase at least composed of CcoN, CcoO, CcoQ and CcoP. Interacts with CcoQ. It depends on heme c as a cofactor.

The protein localises to the cell inner membrane. It participates in energy metabolism; oxidative phosphorylation. Its function is as follows. C-type cytochrome. Part of the cbb3-type cytochrome c oxidase complex. CcoP subunit is required for transferring electrons from donor cytochrome c via its heme groups to CcoO subunit. From there, electrons are shuttled to the catalytic binuclear center of CcoN subunit where oxygen reduction takes place. The complex also functions as a proton pump. The chain is Cbb3-type cytochrome c oxidase subunit CcoP from Rhodobacter capsulatus (Rhodopseudomonas capsulata).